Consider the following 173-residue polypeptide: Crossover junction endodeoxyribonuclease RuvC (173 aa).

Residues D8, E67, and D139 contribute to the active site. The Mg(2+) site is built by D8, E67, and D139.

Belongs to the RuvC family. In terms of assembly, homodimer which binds Holliday junction (HJ) DNA. The HJ becomes 2-fold symmetrical on binding to RuvC with unstacked arms; it has a different conformation from HJ DNA in complex with RuvA. In the full resolvosome a probable DNA-RuvA(4)-RuvB(12)-RuvC(2) complex forms which resolves the HJ. The cofactor is Mg(2+).

Its subcellular location is the cytoplasm. It carries out the reaction Endonucleolytic cleavage at a junction such as a reciprocal single-stranded crossover between two homologous DNA duplexes (Holliday junction).. In terms of biological role, the RuvA-RuvB-RuvC complex processes Holliday junction (HJ) DNA during genetic recombination and DNA repair. Endonuclease that resolves HJ intermediates. Cleaves cruciform DNA by making single-stranded nicks across the HJ at symmetrical positions within the homologous arms, yielding a 5'-phosphate and a 3'-hydroxyl group; requires a central core of homology in the junction. The consensus cleavage sequence is 5'-(A/T)TT(C/G)-3'. Cleavage occurs on the 3'-side of the TT dinucleotide at the point of strand exchange. HJ branch migration catalyzed by RuvA-RuvB allows RuvC to scan DNA until it finds its consensus sequence, where it cleaves and resolves the cruciform DNA. This Pseudoalteromonas atlantica (strain T6c / ATCC BAA-1087) protein is Crossover junction endodeoxyribonuclease RuvC.